A 70-amino-acid chain; its full sequence is DNA-directed RNA polymerase subunit epsilon (70 aa).

It belongs to the RNA polymerase subunit epsilon family. In terms of assembly, RNAP is composed of a core of 2 alpha, a beta and a beta' subunit. The core is associated with a delta subunit, and at least one of epsilon or omega. When a sigma factor is associated with the core the holoenzyme is formed, which can initiate transcription.

The catalysed reaction is RNA(n) + a ribonucleoside 5'-triphosphate = RNA(n+1) + diphosphate. In terms of biological role, a non-essential component of RNA polymerase (RNAP). This Bacillus cereus (strain Q1) protein is DNA-directed RNA polymerase subunit epsilon.